The primary structure comprises 745 residues: AP-3 complex subunit beta (745 aa).

Ser638 carries the post-translational modification Phosphoserine. The interval 674-745 is disordered; sequence YASETSESSE…TEPEPNYWQS (72 aa). Positions 680–718 are enriched in acidic residues; the sequence is ESSEGEYETSTSESEDEETDDTSQEEDNEKNSTPDEDTE.

The protein belongs to the adaptor complexes large subunit family. In terms of assembly, adaptor protein complex 3 (AP-3) is a heterotetramer composed of 2 large adaptins (apl5 and apl6), a medium adaptin (apm3) and a small adaptin (aps3).

It localises to the golgi apparatus. It is found in the cytoplasmic vesicle. The protein resides in the clathrin-coated vesicle membrane. Its function is as follows. Adaptins are components of the adaptor complexes which link clathrin to receptors in coated vesicles. Clathrin-associated protein complexes are believed to interact with the cytoplasmic tails of membrane proteins, leading to their selection and concentration. Beta adaptin is a subunit of the plasma membrane adaptor. This is AP-3 complex subunit beta (apl6) from Schizosaccharomyces pombe (strain 972 / ATCC 24843) (Fission yeast).